A 124-amino-acid polypeptide reads, in one-letter code: Small ribosomal subunit protein uS12 (124 aa).

Aspartate 89 carries the 3-methylthioaspartic acid modification. The segment at 105–124 is disordered; it reads QGVKNRKQARSRYGAKKEKS. Basic residues predominate over residues 108–118; sequence KNRKQARSRYG.

Belongs to the universal ribosomal protein uS12 family. In terms of assembly, part of the 30S ribosomal subunit. Contacts proteins S8 and S17. May interact with IF1 in the 30S initiation complex.

With S4 and S5 plays an important role in translational accuracy. In terms of biological role, interacts with and stabilizes bases of the 16S rRNA that are involved in tRNA selection in the A site and with the mRNA backbone. Located at the interface of the 30S and 50S subunits, it traverses the body of the 30S subunit contacting proteins on the other side and probably holding the rRNA structure together. The combined cluster of proteins S8, S12 and S17 appears to hold together the shoulder and platform of the 30S subunit. This chain is Small ribosomal subunit protein uS12, found in Mycobacterium avium (strain 104).